Reading from the N-terminus, the 307-residue chain is tRNA dimethylallyltransferase (307 aa).

11–18 provides a ligand contact to ATP; that stretch reads GPTGSGKT. 13 to 18 is a substrate binding site; sequence TGSGKT. Residues 36-39 are interaction with substrate tRNA; it reads DSVA.

Belongs to the IPP transferase family. Monomer. Mg(2+) is required as a cofactor.

It catalyses the reaction adenosine(37) in tRNA + dimethylallyl diphosphate = N(6)-dimethylallyladenosine(37) in tRNA + diphosphate. In terms of biological role, catalyzes the transfer of a dimethylallyl group onto the adenine at position 37 in tRNAs that read codons beginning with uridine, leading to the formation of N6-(dimethylallyl)adenosine (i(6)A). This Koribacter versatilis (strain Ellin345) protein is tRNA dimethylallyltransferase.